Consider the following 557-residue polypeptide: Dihydroxy-acid dehydratase (557 aa).

Mg(2+) is bound at residue Asp-78. Cys-119 is a binding site for [2Fe-2S] cluster. Asp-120 and Lys-121 together coordinate Mg(2+). N6-carboxylysine is present on Lys-121. A [2Fe-2S] cluster-binding site is contributed by Cys-192. Glu-446 is a binding site for Mg(2+). The Proton acceptor role is filled by Ser-472.

This sequence belongs to the IlvD/Edd family. As to quaternary structure, homodimer. The cofactor is [2Fe-2S] cluster. It depends on Mg(2+) as a cofactor.

It carries out the reaction (2R)-2,3-dihydroxy-3-methylbutanoate = 3-methyl-2-oxobutanoate + H2O. The catalysed reaction is (2R,3R)-2,3-dihydroxy-3-methylpentanoate = (S)-3-methyl-2-oxopentanoate + H2O. Its pathway is amino-acid biosynthesis; L-isoleucine biosynthesis; L-isoleucine from 2-oxobutanoate: step 3/4. It functions in the pathway amino-acid biosynthesis; L-valine biosynthesis; L-valine from pyruvate: step 3/4. Functions in the biosynthesis of branched-chain amino acids. Catalyzes the dehydration of (2R,3R)-2,3-dihydroxy-3-methylpentanoate (2,3-dihydroxy-3-methylvalerate) into 2-oxo-3-methylpentanoate (2-oxo-3-methylvalerate) and of (2R)-2,3-dihydroxy-3-methylbutanoate (2,3-dihydroxyisovalerate) into 2-oxo-3-methylbutanoate (2-oxoisovalerate), the penultimate precursor to L-isoleucine and L-valine, respectively. In Campylobacter fetus subsp. fetus (strain 82-40), this protein is Dihydroxy-acid dehydratase.